The sequence spans 318 residues: GTP cyclohydrolase MptA (318 aa).

This sequence belongs to the GTP cyclohydrolase IV family. In terms of assembly, homodimer. The cofactor is Fe(2+).

It catalyses the reaction GTP + H2O = 7,8-dihydroneopterin 2',3'-cyclic phosphate + formate + diphosphate + H(+). Its pathway is cofactor biosynthesis; 5,6,7,8-tetrahydromethanopterin biosynthesis. Its function is as follows. Converts GTP to 7,8-dihydro-D-neopterin 2',3'-cyclic phosphate, the first intermediate in the biosynthesis of coenzyme methanopterin. This Methanosarcina mazei (strain ATCC BAA-159 / DSM 3647 / Goe1 / Go1 / JCM 11833 / OCM 88) (Methanosarcina frisia) protein is GTP cyclohydrolase MptA.